The primary structure comprises 337 residues: Putative F-box protein At4g09870 (337 aa).

Residues 1–46 (MSISELSQDLLEEILCRVPAISLKKLRSTCKLWNSLFIDKRVRNEL) enclose the F-box domain.

This chain is Putative F-box protein At4g09870, found in Arabidopsis thaliana (Mouse-ear cress).